The primary structure comprises 1038 residues: Translation initiation factor IF-2 (1038 aa).

Residues Asp48–Met426 form a disordered region. Over residues Gly58 to Ala87 the composition is skewed to low complexity. Over residues Ala88–Ala99 the composition is skewed to pro residues. A compositionally biased stretch (low complexity) spans Glu100–Ala114. The segment covering Gly115–Lys125 has biased composition (pro residues). A compositionally biased stretch (low complexity) spans Ala126–Ala141. A compositionally biased stretch (pro residues) spans Pro142 to Pro153. The segment covering Asp177–Ala199 has biased composition (basic and acidic residues). Positions Arg200–Pro219 are enriched in low complexity. Gly residues predominate over residues Ser261–Gly277. Positions Gly299–Pro315 are enriched in low complexity. Gly residues predominate over residues Pro319–Gly406. Residues Arg410–Arg419 are compositionally biased toward basic residues. Residues Ser531–Asp703 form the tr-type G domain. A G1 region spans residues Gly540–Thr547. Residue Gly540 to Thr547 coordinates GTP. A G2 region spans residues Gly565–His569. The tract at residues Asp590–Gly593 is G3. GTP contacts are provided by residues Asp590 to His594 and Asn644 to Asp647. Residues Asn644–Asp647 form a G4 region. The G5 stretch occupies residues Ser680–Lys682.

This sequence belongs to the TRAFAC class translation factor GTPase superfamily. Classic translation factor GTPase family. IF-2 subfamily.

It localises to the cytoplasm. In terms of biological role, one of the essential components for the initiation of protein synthesis. Protects formylmethionyl-tRNA from spontaneous hydrolysis and promotes its binding to the 30S ribosomal subunits. Also involved in the hydrolysis of GTP during the formation of the 70S ribosomal complex. The protein is Translation initiation factor IF-2 of Streptomyces griseus subsp. griseus (strain JCM 4626 / CBS 651.72 / NBRC 13350 / KCC S-0626 / ISP 5235).